A 403-amino-acid polypeptide reads, in one-letter code: ATP phosphoribosyltransferase regulatory subunit (403 aa).

This sequence belongs to the class-II aminoacyl-tRNA synthetase family. HisZ subfamily. In terms of assembly, heteromultimer composed of HisG and HisZ subunits.

It is found in the cytoplasm. It participates in amino-acid biosynthesis; L-histidine biosynthesis; L-histidine from 5-phospho-alpha-D-ribose 1-diphosphate: step 1/9. Its function is as follows. Required for the first step of histidine biosynthesis. May allow the feedback regulation of ATP phosphoribosyltransferase activity by histidine. This is ATP phosphoribosyltransferase regulatory subunit from Crocosphaera subtropica (strain ATCC 51142 / BH68) (Cyanothece sp. (strain ATCC 51142)).